Reading from the N-terminus, the 810-residue chain is E3 ubiquitin-protein ligase RNF10 (810 aa).

Positions 1–31 (MPQSSPSAAATASDMDKNSGSSSSSASSGSS) are enriched in low complexity. The disordered stretch occupies residues 1–119 (MPQSSPSAAA…SFNGGRRDEV (119 aa)). At serine 5 the chain carries Phosphoserine. A compositionally biased stretch (polar residues) spans 76-92 (NFINQSRRSNSQKSKTF). An interaction with MEOX2 region spans residues 101–185 (GGSSKLFSSS…FNKELFLQAN (85 aa)). Positions 104–113 (SKLFSSSFNG) are enriched in low complexity. Serine 110 and serine 128 each carry phosphoserine. The segment at 225–267 (CPICLYPPTAAKITRCGHIFCWACILHYLSLSEKTWSKCPICY) adopts an RING-type zinc-finger fold. Disordered stretches follow at residues 598–623 (KRKR…EENK), 652–674 (DSAL…LSRS), 722–759 (ADVW…PVPS), and 775–810 (LDTP…VHTK). The span at 607 to 623 (AREERRRERRIEMEENK) shows a compositional bias: basic and acidic residues. A compositionally biased stretch (polar residues) spans 652 to 661 (DSALGSTSTE). The span at 662-674 (GRGALSLSPLSRS) shows a compositional bias: low complexity. Positions 722 to 735 (ADVWPKTAPKKDEN) are enriched in basic and acidic residues. Polar residues predominate over residues 801–810 (LFSTSVVHTK).

Belongs to the RNF10 family. As to quaternary structure, interacts with MEOX2.

It localises to the cytoplasm. Its subcellular location is the nucleus. It carries out the reaction S-ubiquitinyl-[E2 ubiquitin-conjugating enzyme]-L-cysteine + [acceptor protein]-L-lysine = [E2 ubiquitin-conjugating enzyme]-L-cysteine + N(6)-ubiquitinyl-[acceptor protein]-L-lysine.. It functions in the pathway protein modification; protein ubiquitination. E3 ubiquitin-protein ligase that catalyzes monoubiquitination of 40S ribosomal proteins RPS2/us5 and RPS3/us3 in response to ribosome stalling. Part of a ribosome quality control that takes place when ribosomes have stalled during translation initiation (iRQC): RNF10 acts by mediating monoubiquitination of RPS2/us5 and RPS3/us3, promoting their degradation by the proteasome. Also promotes ubiquitination of 40S ribosomal proteins in response to ribosome stalling during translation elongation. The action of RNF10 in iRQC is counteracted by USP10. May also act as a transcriptional factor involved in the regulation of MAG (Myelin-associated glycoprotein) expression. Acts as a regulator of Schwann cell differentiation and myelination. The polypeptide is E3 ubiquitin-protein ligase RNF10 (RNF10) (Bos taurus (Bovine)).